The primary structure comprises 81 residues: Dermaseptin-B2 (81 aa).

A signal peptide spans 1–22 (MAFLKKSLFLVLFLGLVSLSIC). Positions 23 to 43 (EEEKRENEDEEEQEDDEQSEM) are excised as a propeptide. Residues 24 to 46 (EEKRENEDEEEQEDDEQSEMKRG) form a disordered region. Residues 30 to 40 (EDEEEQEDDEQ) show a composition bias toward acidic residues. Residues 54-55 (VG) form a hinge region that separates the two alpha-helices that constitute the peptide region. V78 carries the valine amide modification. Positions 80-81 (EQ) are excised as a propeptide.

Amidation permits an increased antimicrobial activity against some microorganisms such as T.album and S.cerevisiae. In terms of processing, may contain a D-amino acid residue, since the natural peptide is not identical in chromatographic properties to the synthetic peptide. As to expression, expressed by the skin glands.

It is found in the secreted. The protein localises to the target cell membrane. Functionally, cationic amphipathic alpha-helical antimicrobial peptide with potent activity against Gram-negative and Gram-positive bacteria, fungi and protozoa. Acts in a synergistic effect in combination with Plasticin-B1 at doses that are not active alone. Acts by disturbing membrane functions. On model membranes, induces a strong perturbation of anionic lipid bilayers, resides at the hydrocarbon core-water interface, parallel to the plane of the membrane, and interacts preferentially with the polar head groups and glycerol backbone region of the anionic phospholipids, as well as the region of the lipid acyl chain near the bilayer surface. Induces a positive curvature of the bilayer and clustering of anionic lipids, consistent with a carpet mechanism, that may lead to the formation of mixed peptide-phospholipid toroidal, transient pores and membrane permeation/disruption once a threshold peptide accumulation is reached. Also enhances binding of agonists to adenosine A1 receptors (ADORA1), adenosine A2a receptors (ADORA2A), alpha-2 adrenergic receptors (ADRA2A) and 5-hydroxytryptamine 1A receptors (HTR1A). In addition, it enhances guanyl nucleotide exchange which may result in the conversion of receptors to a high affinity state complexed with guanyl nucleotide free G-protein. Affects human behavior eliciting profound malaise, followed by listlessness and then euphoria. Does not show cytotoxic activity on CHO cells. Does not act as a chemoattractant. Does not show hemolytic activity. This chain is Dermaseptin-B2 (ADR), found in Phyllomedusa bicolor (Two-colored leaf frog).